Reading from the N-terminus, the 369-residue chain is Probable methyltransferase TCM_000331 (369 aa).

The S-adenosyl-L-homocysteine site is built by Tyr18, Cys60, Asn65, Asp98, Leu99, Ser137, and Phe138. Mg(2+)-binding residues include Asn176, Asp261, Phe263, and Asn264.

This sequence belongs to the methyltransferase superfamily. Type-7 methyltransferase family. Requires Mg(2+) as cofactor.

The sequence is that of Probable methyltransferase TCM_000331 from Theobroma cacao (Cacao).